A 435-amino-acid polypeptide reads, in one-letter code: Serine--tRNA ligase (435 aa).

238-240 (TAE) is a binding site for L-serine. 269 to 271 (RAE) serves as a coordination point for ATP. Glutamate 292 contacts L-serine. Position 356–359 (356–359 (EISS)) interacts with ATP. Residue serine 392 coordinates L-serine.

It belongs to the class-II aminoacyl-tRNA synthetase family. Type-1 seryl-tRNA synthetase subfamily. Homodimer. The tRNA molecule binds across the dimer.

It localises to the cytoplasm. The enzyme catalyses tRNA(Ser) + L-serine + ATP = L-seryl-tRNA(Ser) + AMP + diphosphate + H(+). The catalysed reaction is tRNA(Sec) + L-serine + ATP = L-seryl-tRNA(Sec) + AMP + diphosphate + H(+). It functions in the pathway aminoacyl-tRNA biosynthesis; selenocysteinyl-tRNA(Sec) biosynthesis; L-seryl-tRNA(Sec) from L-serine and tRNA(Sec): step 1/1. Its function is as follows. Catalyzes the attachment of serine to tRNA(Ser). Is also able to aminoacylate tRNA(Sec) with serine, to form the misacylated tRNA L-seryl-tRNA(Sec), which will be further converted into selenocysteinyl-tRNA(Sec). The polypeptide is Serine--tRNA ligase (Methylobacterium sp. (strain 4-46)).